The sequence spans 303 residues: Probable 5-dehydro-4-deoxyglucarate dehydratase (303 aa).

It belongs to the DapA family.

The catalysed reaction is 5-dehydro-4-deoxy-D-glucarate + H(+) = 2,5-dioxopentanoate + CO2 + H2O. Its pathway is carbohydrate acid metabolism; D-glucarate degradation; 2,5-dioxopentanoate from D-glucarate: step 2/2. In Acidovorax ebreus (strain TPSY) (Diaphorobacter sp. (strain TPSY)), this protein is Probable 5-dehydro-4-deoxyglucarate dehydratase.